The chain runs to 282 residues: Aldo-keto reductase BQ2027_MB2996 (282 aa).

Tyr57 functions as the Proton donor in the catalytic mechanism. Residues Leu197, Val235, Arg237, Ser238, Ala239, Arg243, Ser246, Asn247, and Arg273 each contribute to the NADPH site.

Belongs to the aldo/keto reductase family.

In Mycobacterium bovis (strain ATCC BAA-935 / AF2122/97), this protein is Aldo-keto reductase BQ2027_MB2996.